The following is a 211-amino-acid chain: Arginine exporter protein ArgO (211 aa).

The next 6 helical transmembrane spans lie at 1–21, 37–57, 68–88, 111–131, 147–167, and 182–202; these read MFTY…PLGP, LMIA…GIFG, LLAI…FGAL, IIIT…DTFV, WFAL…ALLA, and IINI…AKEG.

It belongs to the LysE/ArgO transporter (TC 2.A.75) family.

Its subcellular location is the cell inner membrane. It carries out the reaction L-arginine(in) = L-arginine(out). Functionally, involved in the export of arginine. Important to control the intracellular level of arginine and the correct balance between arginine and lysine. This chain is Arginine exporter protein ArgO, found in Klebsiella pneumoniae (strain 342).